Reading from the N-terminus, the 297-residue chain is 4-hydroxy-tetrahydrodipicolinate synthase (297 aa).

Thr55 contacts pyruvate. Catalysis depends on Tyr144, which acts as the Proton donor/acceptor. Lys172 serves as the catalytic Schiff-base intermediate with substrate. Residue Ile213 coordinates pyruvate.

This sequence belongs to the DapA family. In terms of assembly, homotetramer; dimer of dimers.

Its subcellular location is the cytoplasm. The enzyme catalyses L-aspartate 4-semialdehyde + pyruvate = (2S,4S)-4-hydroxy-2,3,4,5-tetrahydrodipicolinate + H2O + H(+). The protein operates within amino-acid biosynthesis; L-lysine biosynthesis via DAP pathway; (S)-tetrahydrodipicolinate from L-aspartate: step 3/4. Functionally, catalyzes the condensation of (S)-aspartate-beta-semialdehyde [(S)-ASA] and pyruvate to 4-hydroxy-tetrahydrodipicolinate (HTPA). The chain is 4-hydroxy-tetrahydrodipicolinate synthase from Lactococcus lactis subsp. lactis (strain IL1403) (Streptococcus lactis).